The chain runs to 452 residues: Maltoporin (452 aa).

The first 25 residues, 1–25, serve as a signal peptide directing secretion; sequence MMITLRKLPLAVAVAAGVMSAQAMA.

This sequence belongs to the porin LamB (TC 1.B.3) family. As to quaternary structure, homotrimer formed of three 18-stranded antiparallel beta-barrels, containing three independent channels.

The protein localises to the cell outer membrane. The catalysed reaction is beta-maltose(in) = beta-maltose(out). Functionally, involved in the transport of maltose and maltodextrins. This chain is Maltoporin, found in Salmonella agona (strain SL483).